Reading from the N-terminus, the 191-residue chain is Cell division protein SepF (191 aa).

Residues 150–191 (TSSSPEEASPSSVSPKNTPQYSVENNTAPEPAWGNSKLSAFS) form a disordered region. Residues 151-164 (SSSPEEASPSSVSP) show a composition bias toward low complexity. A compositionally biased stretch (polar residues) spans 165–177 (KNTPQYSVENNTA).

This sequence belongs to the SepF family. Homodimer. Interacts with FtsZ.

Its subcellular location is the cytoplasm. In terms of biological role, cell division protein that is part of the divisome complex and is recruited early to the Z-ring. Probably stimulates Z-ring formation, perhaps through the cross-linking of FtsZ protofilaments. Its function overlaps with FtsA. The chain is Cell division protein SepF from Prochlorococcus marinus (strain MIT 9312).